Here is a 621-residue protein sequence, read N- to C-terminus: MEKLRELLPKDQYEKIAAINNPYLHEFLAEWIEWLEPSKVFVCTDSPEDEEYVRWKALYYGEEKMLEIPKHTVHYDNYYDQARDKTNTKLLVPKGVELPFLNTMNREEGLKEIREIMKGIMRGKELFICFFVLGPTNSIFTIPAVQLTDSAYVAHSEFLLYRKGYEEFKRLGPTKNFFKFVHSAGELDERKTSKNLDKRRIYIDLLDETVYSANTQYGGNTIGLKKLAFRLTIQRAVKEGWLSEHMFLMRVNGPNGRKTYFTGAYPSMCGKTSTAMIPWENIVGDDLVFIKNVDGIARAVNVEIGVFGIIEGVNQKDDPIIWKVLHSPVEIIFSNVLVKDGKPYWNGMGIEIPDEGENHSGKWWRGKRDAEGKEIPPSHKNARFTVRLEAFPNLDREALNNPCGVEVGGMIFGGRDPDTWPPVREAFDWEHGVITMGASLESETTAATLGKEGVRAFNPMSILDFLSVHIGDYIRNYLEFGRKLKKTPKIFAVNYFLRENGRWLNEKLDKAVWLKWMELRVHNDVDAIETPIGYIPRYEDLKVLFKQVLNKDYSREDYEKQFKIRVPELLAKIERIWKIYEPIDNIPEELFKQLKDERERLLKAKAEFGDYISPFTLEKRI.

Substrate contacts are provided by residues Arg-83 and 217–219 (YGG). Mn(2+) contacts are provided by Lys-226 and His-245. Residue Ser-267 coordinates substrate. Residue 268 to 273 (MCGKTS) participates in GTP binding. Cys-269 is a catalytic residue. Position 286 (Asp-286) interacts with Mn(2+). 381-383 (NAR) contributes to the substrate binding site. GTP is bound by residues Arg-383 and Arg-415.

The protein belongs to the phosphoenolpyruvate carboxykinase [GTP] family. Mn(2+) is required as a cofactor.

It is found in the cytoplasm. The enzyme catalyses oxaloacetate + GTP = phosphoenolpyruvate + GDP + CO2. It functions in the pathway carbohydrate biosynthesis; gluconeogenesis. Functionally, catalyzes the conversion of oxaloacetate (OAA) to phosphoenolpyruvate (PEP), the rate-limiting step in the metabolic pathway that produces glucose from lactate and other precursors derived from the citric acid cycle. This is Phosphoenolpyruvate carboxykinase [GTP] from Pyrococcus horikoshii (strain ATCC 700860 / DSM 12428 / JCM 9974 / NBRC 100139 / OT-3).